We begin with the raw amino-acid sequence, 553 residues long: Transcriptional regulator HilA (553 aa).

Residues 11-107 (NKKFVFDDFI…LYGQGYRFNR (97 aa)) constitute a DNA-binding region (ompR/PhoB-type). A 4-aspartylphosphate modification is found at D62. The TPR repeat unit spans residues 372–405 (ADIKYYYGWNLFMAGQLEEALQTINECLKLDPTR).

The main transcriptional regulator of the Salmonella pathogenicity island 1 (SPI1) gene expression. Activates the expression of invasion genes by a direct action at their promoters and also indirectly by increasing the level of invF. Also binds upstream of prgH and directly activates the expression of prgHIJK operon. The chain is Transcriptional regulator HilA (hilA) from Salmonella paratyphi A (strain ATCC 9150 / SARB42).